A 495-amino-acid polypeptide reads, in one-letter code: Glycerol kinase (495 aa).

Thr11 is an ADP binding site. Thr11, Thr12, and Ser13 together coordinate ATP. Thr11 is a binding site for sn-glycerol 3-phosphate. Arg15 contributes to the ADP binding site. Sn-glycerol 3-phosphate contacts are provided by Arg81, Glu82, Tyr133, and Asp242. Residues Arg81, Glu82, Tyr133, Asp242, and Gln243 each coordinate glycerol. The ADP site is built by Thr264 and Gly307. ATP is bound by residues Thr264, Gly307, Gln311, and Gly409. Positions 409 and 413 each coordinate ADP.

The protein belongs to the FGGY kinase family.

It catalyses the reaction glycerol + ATP = sn-glycerol 3-phosphate + ADP + H(+). The protein operates within polyol metabolism; glycerol degradation via glycerol kinase pathway; sn-glycerol 3-phosphate from glycerol: step 1/1. With respect to regulation, inhibited by fructose 1,6-bisphosphate (FBP). Its function is as follows. Key enzyme in the regulation of glycerol uptake and metabolism. Catalyzes the phosphorylation of glycerol to yield sn-glycerol 3-phosphate. This chain is Glycerol kinase, found in Borrelia hermsii (strain HS1 / DAH).